Reading from the N-terminus, the 100-residue chain is Putative septation protein SpoVG (100 aa).

This sequence belongs to the SpoVG family.

Its function is as follows. Could be involved in septation. This chain is Putative septation protein SpoVG, found in Staphylococcus haemolyticus (strain JCSC1435).